A 365-amino-acid polypeptide reads, in one-letter code: Chorismate synthase (365 aa).

NADP(+)-binding residues include R48 and R54. Residues R125 to S127, N238 to A239, G278, K293 to S297, and R319 each bind FMN.

It belongs to the chorismate synthase family. In terms of assembly, homotetramer. FMNH2 is required as a cofactor.

The catalysed reaction is 5-O-(1-carboxyvinyl)-3-phosphoshikimate = chorismate + phosphate. It functions in the pathway metabolic intermediate biosynthesis; chorismate biosynthesis; chorismate from D-erythrose 4-phosphate and phosphoenolpyruvate: step 7/7. Its function is as follows. Catalyzes the anti-1,4-elimination of the C-3 phosphate and the C-6 proR hydrogen from 5-enolpyruvylshikimate-3-phosphate (EPSP) to yield chorismate, which is the branch point compound that serves as the starting substrate for the three terminal pathways of aromatic amino acid biosynthesis. This reaction introduces a second double bond into the aromatic ring system. The polypeptide is Chorismate synthase (Alteromonas mediterranea (strain DSM 17117 / CIP 110805 / LMG 28347 / Deep ecotype)).